We begin with the raw amino-acid sequence, 206 residues long: MARYLGPKLKLSRREGTDLFLKSGVRAIDSKCKIEQAPGQHGARKPRLSDYGVQLREKQKVRRIYGVLERQFRNYYKEAARLKGNTGANLLQLLEGRLDNVVYRMGFGATRAEARQMVSHKAIMVNGRVVSIASYQVSPNDVVSIREKAKKQSRVKAALELAEQREKPTWLEVDAAKMEGVFKRIPERTDLSADINEHLIVELYSK.

The S4 RNA-binding domain maps to 96 to 156 (GRLDNVVYRM…EKAKKQSRVK (61 aa)).

Belongs to the universal ribosomal protein uS4 family. In terms of assembly, part of the 30S ribosomal subunit. Contacts protein S5. The interaction surface between S4 and S5 is involved in control of translational fidelity.

Functionally, one of the primary rRNA binding proteins, it binds directly to 16S rRNA where it nucleates assembly of the body of the 30S subunit. In terms of biological role, with S5 and S12 plays an important role in translational accuracy. The protein is Small ribosomal subunit protein uS4 of Pectobacterium atrosepticum (strain SCRI 1043 / ATCC BAA-672) (Erwinia carotovora subsp. atroseptica).